The chain runs to 485 residues: Endo-1,4-beta-xylanase C (485 aa).

The signal sequence occupies residues 1-19; sequence MKFLQIIPVLLSLTSTTLA. Positions 34–234 constitute a GH11 domain; it reads KETGNKVGTI…GNGGVSGTAD (201 aa). N56 and N107 each carry an N-linked (GlcNAc...) asparagine glycan. Residue E128 is the Nucleophile of the active site. The N-linked (GlcNAc...) asparagine glycan is linked to N175. E221 (proton donor) is an active-site residue. Residues 250 to 450 are disordered; that stretch reads ASPAPAGGAP…PQNASDGGNC (201 aa). Low complexity-rich tracts occupy residues 265 to 330 and 344 to 354; these read AGND…QGQH and GSDFNNWSQGG. Repeat copies occupy residues 275-280, 281-286, 287-292, 293-298, 299-304, 310-315, and 316-321. The segment at 275-321 is 7 X 6 AA tandem repeats of G-Q-Q-P-P-Q; that stretch reads GQQPPQGQQPPQGQQPPQGQQPPQGQQPPQGNDQQGQQPPQGQQPPQ. N-linked (GlcNAc...) asparagine glycosylation occurs at N349. 8 repeat units span residues 353 to 361, 362 to 370, 371 to 379, 380 to 388, 389 to 397, 399 to 407, 408 to 416, and 417 to 425. The 8 X 9 AA tandem repeats of G-G-[SN]-P-W-G-G-N-Q stretch occupies residues 353 to 425; that stretch reads GGSPWGGNQG…QGGNPWGGNQ (73 aa). Residues 355-425 show a composition bias toward gly residues; sequence SPWGGNQGGS…QGGNPWGGNQ (71 aa). Over residues 426-445 the composition is skewed to low complexity; that stretch reads WGAPQNAAAPQSAAAPQNAS. N-linked (GlcNAc...) asparagine glycosylation occurs at N443. Residues 449 to 484 enclose the CBM1 domain; the sequence is NCASLWGQCGGQGYNGPSCCSEGSCKPINEYFHQCQ.

It belongs to the glycosyl hydrolase 11 (cellulase G) family.

The protein localises to the secreted. The enzyme catalyses Endohydrolysis of (1-&gt;4)-beta-D-xylosidic linkages in xylans.. The protein operates within glycan degradation; xylan degradation. Its function is as follows. Endo-1,4-beta-xylanase involved in the hydrolysis of xylan, a major structural heterogeneous polysaccharide found in plant biomass representing the second most abundant polysaccharide in the biosphere, after cellulose. This is Endo-1,4-beta-xylanase C (xynC) from Neocallimastix patriciarum (Rumen fungus).